The following is a 213-amino-acid chain: dITP/XTP pyrophosphatase (213 aa).

7–12 (TSNLDK) lines the substrate pocket. Asp-74 serves as the catalytic Proton acceptor. Asp-74 serves as a coordination point for Mg(2+). Residues Ser-75, 165–168 (FGYD), Lys-188, and 193–194 (HR) contribute to the substrate site.

This sequence belongs to the HAM1 NTPase family. Homodimer. Mg(2+) serves as cofactor.

The enzyme catalyses XTP + H2O = XMP + diphosphate + H(+). The catalysed reaction is dITP + H2O = dIMP + diphosphate + H(+). It catalyses the reaction ITP + H2O = IMP + diphosphate + H(+). Pyrophosphatase that catalyzes the hydrolysis of nucleoside triphosphates to their monophosphate derivatives, with a high preference for the non-canonical purine nucleotides XTP (xanthosine triphosphate), dITP (deoxyinosine triphosphate) and ITP. Seems to function as a house-cleaning enzyme that removes non-canonical purine nucleotides from the nucleotide pool, thus preventing their incorporation into DNA/RNA and avoiding chromosomal lesions. The sequence is that of dITP/XTP pyrophosphatase from Campylobacter concisus (strain 13826).